A 112-amino-acid polypeptide reads, in one-letter code: UPF0145 protein LAF_1635 (112 aa).

Belongs to the UPF0145 family.

In Limosilactobacillus fermentum (strain NBRC 3956 / LMG 18251) (Lactobacillus fermentum), this protein is UPF0145 protein LAF_1635.